The sequence spans 427 residues: Adenylosuccinate synthetase (427 aa).

GTP contacts are provided by residues 12 to 18 (GDEGKGK) and 40 to 42 (GHT). The active-site Proton acceptor is aspartate 13. The Mg(2+) site is built by aspartate 13 and glycine 40. IMP-binding positions include 13 to 16 (DEGK), 38 to 41 (NAGH), threonine 131, arginine 145, glutamine 226, threonine 241, and arginine 305. Histidine 41 (proton donor) is an active-site residue. 301-307 (ATTGRKR) is a binding site for substrate. Residues arginine 307, 333–335 (KLD), and 415–417 (SVG) each bind GTP.

It belongs to the adenylosuccinate synthetase family. In terms of assembly, homodimer. Requires Mg(2+) as cofactor.

Its subcellular location is the cytoplasm. It carries out the reaction IMP + L-aspartate + GTP = N(6)-(1,2-dicarboxyethyl)-AMP + GDP + phosphate + 2 H(+). The protein operates within purine metabolism; AMP biosynthesis via de novo pathway; AMP from IMP: step 1/2. Functionally, plays an important role in the de novo pathway of purine nucleotide biosynthesis. Catalyzes the first committed step in the biosynthesis of AMP from IMP. The polypeptide is Adenylosuccinate synthetase (Oleidesulfovibrio alaskensis (strain ATCC BAA-1058 / DSM 17464 / G20) (Desulfovibrio alaskensis)).